The following is a 494-amino-acid chain: ETS translocation variant 4 (494 aa).

Disordered stretches follow at residues 82 to 113 and 139 to 201; these read ENSV…SHKQ and AGGS…SGSA. A compositionally biased stretch (polar residues) spans 100–113; the sequence is SPGSDPSQSCSHKQ. The span at 176–187 shows a compositional bias: low complexity; that stretch reads SSSQSHACHSHS. Residues 188 to 197 are compositionally biased toward polar residues; the sequence is YPMNPSSRFP. Residues 350–430 constitute a DNA-binding region (ETS); that stretch reads LQLWQFLVAL…AGERYVYKFV (81 aa).

The protein belongs to the ETS family. Phosphorylated. In terms of tissue distribution, in the embryo, expressed ubiquitously until the late blastula stage, in the marginal zone of gastrula stages, in the presumptive forebrain and hindbrain and in the trunk region of early somite stages. In later stages, also expressed in Rohon-Beard neurons, epiphysis, lateral line placodes, pectoral fin buds, developing lens and heart.

It is found in the nucleus. Functionally, transcriptional activator that binds to the (5'-CCGGA[AT]-3') motif. May control the acquisition of specific cell fates at an early stage during development of the somites and nervous system. May mediate the cellular effects of the fibroblast growth factors on embryogenesis. The sequence is that of ETS translocation variant 4 (etv4) from Danio rerio (Zebrafish).